Here is a 506-residue protein sequence, read N- to C-terminus: Anaerobic nitric oxide reductase transcription regulator NorR (506 aa).

Position 57 is a 4-aspartylphosphate (Asp57). In terms of domain architecture, Sigma-54 factor interaction spans 187 to 416 (MIGLSPAMTQ…LEHAIHRAVV (230 aa)). ATP is bound by residues 215 to 222 (GETGTGKE) and 278 to 287 (ADNGTLFLDE). The H-T-H motif DNA-binding region spans 481–500 (WAASARALETDVANLHRLAK).

It participates in nitrogen metabolism; nitric oxide reduction. Functionally, required for the expression of anaerobic nitric oxide (NO) reductase, acts as a transcriptional activator for at least the norVW operon. Activation also requires sigma-54. The protein is Anaerobic nitric oxide reductase transcription regulator NorR of Salmonella newport (strain SL254).